The sequence spans 258 residues: Deoxyribose-phosphate aldolase (258 aa).

The Proton donor/acceptor role is filled by D101. Residue K166 is the Schiff-base intermediate with acetaldehyde of the active site. K200 functions as the Proton donor/acceptor in the catalytic mechanism.

It belongs to the DeoC/FbaB aldolase family. DeoC type 2 subfamily.

It localises to the cytoplasm. The catalysed reaction is 2-deoxy-D-ribose 5-phosphate = D-glyceraldehyde 3-phosphate + acetaldehyde. It functions in the pathway carbohydrate degradation; 2-deoxy-D-ribose 1-phosphate degradation; D-glyceraldehyde 3-phosphate and acetaldehyde from 2-deoxy-alpha-D-ribose 1-phosphate: step 2/2. Functionally, catalyzes a reversible aldol reaction between acetaldehyde and D-glyceraldehyde 3-phosphate to generate 2-deoxy-D-ribose 5-phosphate. This Haemophilus ducreyi (strain 35000HP / ATCC 700724) protein is Deoxyribose-phosphate aldolase.